The chain runs to 536 residues: Apolipoprotein N-acyltransferase (536 aa).

7 helical membrane-spanning segments follow: residues 10 to 30, 42 to 62, 76 to 96, 107 to 127, 136 to 158, 181 to 201, and 212 to 232; these read IASGIILAWGWKRAVIALLAG, AWPVLFITFPIAVWLIDGSAA, WWFGFGYFVPGLYWIGYAFLV, AAICGLPAYLALFTALGFALA, LRILSLAVSLTISEWLRGHLLTG, IGIWGLTLLTVAIFASPAVLI, and AVPAMALGVLAAMTVFGGIRL. Residues 248–501 form the CN hydrolase domain; it reads MQPNLPQDAR…EGVLDSGLPA (254 aa). Glu-295 acts as the Proton acceptor in catalysis. The active site involves Lys-360. Catalysis depends on Cys-413, which acts as the Nucleophile. The chain crosses the membrane as a helical span at residues 509–529; sequence ARVGELPAAVLVALVMMLVLL.

Belongs to the CN hydrolase family. Apolipoprotein N-acyltransferase subfamily.

It localises to the cell inner membrane. The enzyme catalyses N-terminal S-1,2-diacyl-sn-glyceryl-L-cysteinyl-[lipoprotein] + a glycerophospholipid = N-acyl-S-1,2-diacyl-sn-glyceryl-L-cysteinyl-[lipoprotein] + a 2-acyl-sn-glycero-3-phospholipid + H(+). It participates in protein modification; lipoprotein biosynthesis (N-acyl transfer). Its function is as follows. Catalyzes the phospholipid dependent N-acylation of the N-terminal cysteine of apolipoprotein, the last step in lipoprotein maturation. This Rhodopseudomonas palustris (strain ATCC BAA-98 / CGA009) protein is Apolipoprotein N-acyltransferase.